Reading from the N-terminus, the 492-residue chain is Prostaglandin E2 receptor EP4 subtype (492 aa).

Residues 1–19 (MSIPGTNASSSQASNPLNS) lie on the Extracellular side of the membrane. N-linked (GlcNAc...) asparagine glycosylation occurs at asparagine 7. A helical membrane pass occupies residues 20-43 (PVTIPAVMFIFGVVGNLVAIVVLC). Over 44–55 (KSRKEQKETTFY) the chain is Cytoplasmic. A helical transmembrane segment spans residues 56-79 (TLVCGLAVTDLLGTLLVSPVTIAT). Residues 80–96 (YLKGQWPGGHALCEYST) lie on the Extracellular side of the membrane. Residues cysteine 92 and cysteine 170 are joined by a disulfide bond. Residues 97 to 115 (FILLFFGLSGLSIICAMSI) form a helical membrane-spanning segment. Residues 116–135 (ERYLAINHAYFYSHYVDKRL) lie on the Cytoplasmic side of the membrane. The helical transmembrane segment at 136–160 (AGLTLFAVYASNVLFCALPSMGLGS) threads the bilayer. Over 161–184 (SRLQYPATWCFIDWTTNVTAHAAF) the chain is Extracellular. The helical transmembrane segment at 185-211 (SYMYAGFSSFLILATVLCNVLVCGALL) threads the bilayer. At 212–273 (RMHRQFMRRT…RSFRRIAGAE (62 aa)) the chain is on the cytoplasmic side. The chain crosses the membrane as a helical span at residues 274–301 (IQMVILLIATSLVVLICSIPLVVRVFVN). Topologically, residues 302 to 318 (QLYRPQLEPVIGKNPDL) are extracellular. Residues 319–338 (QAIRIASVSPILDPWIYILL) form a helical membrane-spanning segment. Over 339 to 492 (RKTVLSKAIE…ETLNLSEKCI (154 aa)) the chain is Cytoplasmic. Positions 361–374 (RRERSGPHCSDSRR) are enriched in basic and acidic residues. Positions 361 to 383 (RRERSGPHCSDSRRTSSAVSGHS) are disordered. Serine 380, serine 383, serine 385, and serine 388 each carry phosphoserine.

Belongs to the G-protein coupled receptor 1 family. As to quaternary structure, interacts with FEM1A. Post-translationally, phosphorylation mediates agonist-mediated desensitization by promoting cytoplasmic retention.

The protein resides in the cell membrane. Its function is as follows. Receptor for prostaglandin E2 (PGE2). The activity of this receptor is mediated by G(s) proteins that stimulate adenylate cyclase. Has a relaxing effect on smooth muscle. May play an important role in regulating renal hemodynamics, intestinal epithelial transport, adrenal aldosterone secretion, and uterine function. The sequence is that of Prostaglandin E2 receptor EP4 subtype (PTGER4) from Bos taurus (Bovine).